The chain runs to 797 residues: N-acetylneuraminate (7)9-O-acetyltransferase (797 aa).

Over 1 to 18 (MAALAYNLGKREINHYFS) the chain is Cytoplasmic. The chain crosses the membrane as a helical span at residues 19–39 (VRSAKVLALVAVLLLAACHLA). The Lumenal segment spans residues 40-313 (SRRYRGNDSC…QPRPPLTLIQ (274 aa)). Asn-46 carries an N-linked (GlcNAc...) asparagine glycan. Residue Ser-94 is the Acyl-ester intermediate of the active site. N-linked (GlcNAc...) asparagine glycans are attached at residues Asn-175 and Asn-187. Residues Asp-270 and His-273 contribute to the active site. A helical membrane pass occupies residues 314–334 (KLAACFFTLSIIGYFIFYVIH). Residues 335–363 (RNAHRKNKPCTDLESGEEKKNIINTPVSS) lie on the Cytoplasmic side of the membrane. A helical membrane pass occupies residues 364 to 384 (LEILLQSFCKLGLIMAYFYMC). The Lumenal portion of the chain corresponds to 385–395 (DRANLFMKENK). A helical membrane pass occupies residues 396 to 416 (FYTHSSFFIPIIYILVLGVFY). Over 417–439 (NENTKETKVLNREQTDEWKGWMQ) the chain is Cytoplasmic. A helical membrane pass occupies residues 440–460 (LVILIYHISGASTFLPVYMHI). Position 461 (Arg-461) is a topological domain, lumenal. The helical transmembrane segment at 462–482 (VLVAAYLFQTGYGHFSYFWIK) threads the bilayer. At 483–486 (GDFG) the chain is on the cytoplasmic side. The chain crosses the membrane as a helical span at residues 487-507 (IHRVCQVLFRLNFLVVVLCIV). Residues 508–513 (MDRPYQ) are Lumenal-facing. The chain crosses the membrane as a helical span at residues 514–534 (FYYFVPLVTVWFMVIYVTLAL). At 535 to 546 (WPQITQKKANGN) the chain is on the cytoplasmic side. The chain crosses the membrane as a helical span at residues 547-567 (FFWYLGLLLKLGLLLLCIWFL). At 568 to 599 (AYSQGAFEKIFSLWPLSKCFELEGSVYEWWFR) the chain is on the lumenal side. A helical membrane pass occupies residues 600-620 (WRLDRYVVFHGVLFAFIYLAL). At 621–638 (QRRQILSEGKGEPLFSNK) the chain is on the cytoplasmic side. A helical transmembrane segment spans residues 639–659 (ISNFLLFVSVVSFLTYSIWAS). Topologically, residues 660 to 671 (SCKNKAECNELH) are lumenal. A helical membrane pass occupies residues 672–692 (PSVSVVQIVAFILIRNIPGYA). The Cytoplasmic portion of the chain corresponds to 693–698 (RSIYSS). The helical transmembrane segment at 699–719 (FFAWFGKISLELFICQYHIWL) threads the bilayer. Over 720–725 (AADTRG) the chain is Lumenal. A helical transmembrane segment spans residues 726-746 (ILVLIPGNPTLNIIVSTFIFV). Over 747-770 (CVAHEISQITTDLAQVVIPKDNPS) the chain is Cytoplasmic. A helical transmembrane segment spans residues 771 to 791 (LFRRLACTIAFFGGVLILSSI). Residues 792-797 (QDKSRL) lie on the Lumenal side of the membrane.

It belongs to the PC-esterase family. CASD1 subfamily. N-glycosylated. As to expression, ubiquitously expressed.

It localises to the golgi apparatus membrane. The enzyme catalyses CMP-N-acetyl-beta-neuraminate + acetyl-CoA = CMP-N-acetyl-9-O-acetyl-beta-neuraminate + CoA. The catalysed reaction is a ganglioside GD3 (d18:1(4E)) + acetyl-CoA = a ganglioside Ac-O-7-GD3(d18:1(4E)) + CoA. It carries out the reaction CMP-N-acetyl-beta-neuraminate + acetyl-CoA = CMP-N-acetyl-7-O-acetyl-beta-neuraminate + CoA. Functionally, key enzyme in the biosynthesis of O-acetylated (O-Ac) sialoglycans such as gangliosides O-AcGD3 and O-AcGD2, which affect various processes such as cell-cell interactions, host-pathogen recognition. Catalyzes the transfer of an acetyl group from a donor, the acetyl-coenzyme-A molecule (acetyl-CoA), to the C7/8/9 OH-position of a sialic acid residue. The primary site of O-acetyl group transfer on sialic acid seems to depend on cell type and can be C7, from which the O-acetyl group could subsequently migrate to the C8 and then to the C9 position, or at C9 with possibility of migrating to the C8 and then to the C7 position. Together with ST8SIA1 (GD3 synthase) it increases the levels of ganglioside Ac-O-7-GD3. Can transfer the acetyl group from acetyl-CoA to free sialate (N-acetylneuraminate, Neu5Ac) in vitro, but has preferred substrate specificity for CMP-activated sialate (CMP-Neu5Ac), resulting in the formation of 9-O-acetylated CMP-Neu5Ac (CMP-Neu5,9Ac2). CMP-Neu5,9Ac2 may be used by sialyltransferases as a sialate donor for glycoconjugate acceptors such as ganglioside GD3. O-acetylation at position C9 of ganglioside GD3 can counteract the pro-apoptotic effects of the ganglioside GD3 in tumor cells. The polypeptide is N-acetylneuraminate (7)9-O-acetyltransferase (Mus musculus (Mouse)).